A 1127-amino-acid polypeptide reads, in one-letter code: MARFVPSPPPNCLSYKSEGRLGEQDWQAHFKVPCCGVDPSQLESEEAEVDVRERDTQRDREPKRARDLTLRDSCTDNSMQFGTRTTAAEPGFMGTWQNADTNLLFRMSQQVPLACAGRVLGADFCPNLEEPDQRLEVQAIRCTLVNCTCECFQPGKINLRTCDQCKHGWVAHALDKLSTQHLYHPTQVEIVQSNVVFDISSLMLYGTQAVPVRLKILLDRLFSVLKQEEVLHILHGLGWTLRDYVRGYILQDAAGKVLDRWAIMSREEEIITLQQFLRFGETKSIVELMAIQEKEGQAVAVPSSKTDSDIRTFIESNNRTRSPSLLAHLENSNPSSIHHFENIPNSLAFLLPFQYINPVSAPLLGLPPNGLLLEQPGLRLREPSISTQNEYNESSESEVSPTPYKSDQTPNRNALTSITNVEPKTEPACVSPIQNSAPVSDLSKTEHPKSSFRIHRMRRMGSASRKGRVFCNACGKTFYDKGTLKIHYNAVHLKIKHRCTIEGCNMVFSSLRSRNRHSANPNPRLHMPMLRNNRDKDLIRATSGAATPVIASTKSNLTLTSPGRPPMGFTTPPLDPVLQNPLPSQLVFSGLKTVQPVPPFYRSLLTPGEMVSPPTSLPTSPIIPTSGTIEQHPPPPSEPIVPAVMMGTHEPSADLAPKKKPRKSSMPVKIEKEIIDTADEFDDEDDDPNDGGTVVNDMSHDNHCHSQDEMSPGMSVKDFSKHNRTRCISRTEIRRADSMTSEDQEPERDYENESESSEPKLGEESMEGDEHLHSEVSEKVLMNSERPDENHSEPSHQDVIKVKEEFTDPTYDMFYMSQYGLYNGGGASMAALHESFTSSLNYGSPQKFSPEGDLCSSPDPKICYVCKKSFKSSYSVKLHYRNVHLKEMHVCTVAGCNAAFPSRRSRDRHSANINLHRKLLTKELDDMSLDSSQPSLSKDLRDEFLMKIYGAQHPLGLDGREDASSPAGTEDSHLNGYGRGMAEDYMVLDLSTTSSLQSSSSVHSSRESDAGSDEGILLDDIDGASDSGESTHKAEAPTLPGSLGAEVSGSLMFSSLSGSNGGIMCNICHKMYSNKGTLRVHYKTVHLREMHKCKVPGCNMMFSSVRSRNRHSQNPNLHKNIPFTSID.

Positions 44-67 (SEEAEVDVRERDTQRDREPKRARD) are disordered. A compositionally biased stretch (basic and acidic residues) spans 49–67 (VDVRERDTQRDREPKRARD). Lys305 is covalently cross-linked (Glycyl lysine isopeptide (Lys-Gly) (interchain with G-Cter in SUMO2)). The tract at residues 386-450 (STQNEYNESS…DLSKTEHPKS (65 aa)) is disordered. The segment covering 389–400 (NEYNESSESEVS) has biased composition (low complexity). A compositionally biased stretch (polar residues) spans 403–422 (PYKSDQTPNRNALTSITNVE). Glycyl lysine isopeptide (Lys-Gly) (interchain with G-Cter in SUMO2) cross-links involve residues Lys424, Lys444, and Lys449. The C2H2-type 1 zinc-finger motif lies at 469-492 (VFCNACGKTFYDKGTLKIHYNAVH). At Ser589 the chain carries Phosphoserine. Residue Lys669 forms a Glycyl lysine isopeptide (Lys-Gly) (interchain with G-Cter in SUMO2) linkage. The disordered stretch occupies residues 675 to 772 (IDTADEFDDE…EESMEGDEHL (98 aa)). A compositionally biased stretch (acidic residues) spans 676–689 (DTADEFDDEDDDPN). 2 stretches are compositionally biased toward basic and acidic residues: residues 698–708 (MSHDNHCHSQD) and 747–772 (ERDY…DEHL). Residues 861-884 (KICYVCKKSFKSSYSVKLHYRNVH) form a C2H2-type 2 zinc finger. Glycyl lysine isopeptide (Lys-Gly) (interchain with G-Cter in SUMO2) cross-links involve residues Lys922 and Lys947. 2 disordered regions span residues 955 to 976 (LGLD…HLNG) and 996 to 1041 (LQSS…TLPG). Residues 1010-1023 (AGSDEGILLDDIDG) are compositionally biased toward acidic residues. 2 consecutive C2H2-type zinc fingers follow at residues 1063–1086 (IMCN…KTVH) and 1091–1118 (HKCK…PNLH). Residues 1107–1127 (SRNRHSQNPNLHKNIPFTSID) are disordered.

As to expression, highly expressed in ovary, testis and kidney. Expressed at moderate levels in skin and small intestine, and at lower levels in lung. Trace amounts of expression detected in liver and colon. Not detected in brain, spleen or thymus.

The protein localises to the nucleus. Functionally, probable transcription factor specific for skin keratinocytes. May play a role in the differentiation of spermatozoa and oocytes. May also play an important role in early urinary-tract development. This Mus musculus (Mouse) protein is Zinc finger protein basonuclin-2.